Here is a 230-residue protein sequence, read N- to C-terminus: Orotidine 5'-phosphate decarboxylase (230 aa).

Substrate contacts are provided by residues aspartate 11, lysine 34, 61–70, threonine 117, arginine 179, glutamine 188, glycine 208, and arginine 209; that span reads DLKLHDIPNT. Catalysis depends on lysine 63, which acts as the Proton donor.

Belongs to the OMP decarboxylase family. Type 1 subfamily. Homodimer.

The enzyme catalyses orotidine 5'-phosphate + H(+) = UMP + CO2. It participates in pyrimidine metabolism; UMP biosynthesis via de novo pathway; UMP from orotate: step 2/2. Catalyzes the decarboxylation of orotidine 5'-monophosphate (OMP) to uridine 5'-monophosphate (UMP). The sequence is that of Orotidine 5'-phosphate decarboxylase from Streptococcus sanguinis (strain SK36).